We begin with the raw amino-acid sequence, 1116 residues long: Angiopoietin-1 receptor (1116 aa).

Positions 1–21 are cleaved as a signal peptide; that stretch reads MCLLDSCTALLLLGCWMSGSA. The Extracellular segment spans residues 22 to 745; the sequence is VRISDVTLVN…FAAHGHLLLY (724 aa). A disulfide bridge connects residues cysteine 46 and cysteine 106. Residues 46 to 126 enclose the Ig-like C2-type 1 domain; that stretch reads CVSSDWSSGG…YTYKMLQEAA (81 aa). Asparagine 110, asparagine 143, and asparagine 223 each carry an N-linked (GlcNAc...) asparagine glycan. 3 EGF-like domains span residues 214-256, 258-302, and 304-342; these read SCRA…HTCD, VCGE…LSCN, and ACPD…SRCE. Cystine bridges form between cysteine 215–cysteine 224, cysteine 228–cysteine 237, cysteine 231–cysteine 244, cysteine 246–cysteine 255, cysteine 259–cysteine 268, cysteine 272–cysteine 277, cysteine 283–cysteine 290, cysteine 292–cysteine 301, cysteine 305–cysteine 314, cysteine 318–cysteine 325, cysteine 320–cysteine 331, and cysteine 333–cysteine 341. Residues 348-438 enclose the Ig-like C2-type 2 domain; sequence PVISHLRDVE…MQVEDEFTVE (91 aa). Residues asparagine 367, asparagine 387, and asparagine 425 are each glycosylated (N-linked (GlcNAc...) asparagine). A disulfide bridge connects residues cysteine 368 and cysteine 422. Fibronectin type-III domains follow at residues 444–538, 540–633, and 634–729; these read RPQN…TQVL, LPVG…QLPP, and PPAN…TLPQ. Residues asparagine 590, asparagine 637, and asparagine 642 are each glycosylated (N-linked (GlcNAc...) asparagine). A helical membrane pass occupies residues 746–766; it reads AILGSAGMTCCTVLLAFCIVL. At 767 to 1116 the chain is on the cytoplasmic side; sequence QLKRNTLQRR…GIDCSAEEAG (350 aa). The region spanning 816 to 1095 is the Protein kinase domain; it reads IQFQDVLGEG…RMLEERKTYV (280 aa). ATP is bound by residues 822–830 and lysine 847; that span reads LGEGNFGQV. At tyrosine 852 the chain carries Phosphotyrosine; by autocatalysis. The active-site Proton acceptor is the aspartate 956. Phosphotyrosine; by autocatalysis is present on residues tyrosine 984, tyrosine 1094, and tyrosine 1100.

Belongs to the protein kinase superfamily. Tyr protein kinase family. Tie subfamily. As to quaternary structure, interacts with svep1. Post-translationally, autophosphorylated on tyrosine residues in response to ligand binding. Autophosphorylation occurs in trans, i.e. one subunit of the dimeric receptor phosphorylates tyrosine residues on the other subunit. Autophosphorylation occurs in a sequential manner, where Tyr-984 in the kinase activation loop is phosphorylated first, followed by autophosphorylation at additional tyrosine residues. Phosphorylation is important for interaction with scaffold proteins and effectors.

The protein resides in the cell membrane. Its subcellular location is the cell junction. It localises to the focal adhesion. The protein localises to the cytoplasm. It is found in the cytoskeleton. The enzyme catalyses L-tyrosyl-[protein] + ATP = O-phospho-L-tyrosyl-[protein] + ADP + H(+). Its activity is regulated as follows. Angiopoietin binding leads to receptor dimerization and activation by autophosphorylation at Tyr-984 on the kinase activation loop. Functionally, tyrosine-protein kinase that acts as a cell-surface receptor for angiopoietins and regulates angiogenesis, endothelial cell survival, proliferation, migration, adhesion and cell spreading, reorganization of the actin cytoskeleton, but also maintenance of vascular quiescence. Can activate or inhibit angiogenesis, depending on the context. Angiopoietin signaling triggers receptor dimerization and autophosphorylation at specific tyrosine residues that then serve as binding sites for scaffold proteins and effectors. The chain is Angiopoietin-1 receptor from Danio rerio (Zebrafish).